The following is a 262-amino-acid chain: tRNA (guanine-N(1)-)-methyltransferase (262 aa).

Residues glycine 111 and 130-135 (LGDFVL) contribute to the S-adenosyl-L-methionine site.

The protein belongs to the RNA methyltransferase TrmD family. In terms of assembly, homodimer.

It localises to the cytoplasm. It carries out the reaction guanosine(37) in tRNA + S-adenosyl-L-methionine = N(1)-methylguanosine(37) in tRNA + S-adenosyl-L-homocysteine + H(+). Specifically methylates guanosine-37 in various tRNAs. The chain is tRNA (guanine-N(1)-)-methyltransferase from Desulfitobacterium hafniense (strain Y51).